Here is a 156-residue protein sequence, read N- to C-terminus: Pilin-like protein PilA1 (156 aa).

The propeptide at 1 to 5 (MTRRG) is leader sequence. Leu-6 bears the N-methylleucine mark. The helical transmembrane segment at 6–29 (LTLLELLLVLGILGVLLGLALPLL) threads the bilayer.

The protein localises to the cell inner membrane. It is found in the cell outer membrane. It localises to the periplasm. Its function is as follows. Plays an essential role in natural DNA transformation but is not required for pilus biogenesis. The polypeptide is Pilin-like protein PilA1 (pilA1) (Thermus thermophilus (strain ATCC BAA-163 / DSM 7039 / HB27)).